A 476-amino-acid polypeptide reads, in one-letter code: 1-aminocyclopropane-1-carboxylate synthase 4 (476 aa).

Residue Lys282 is modified to N6-(pyridoxal phosphate)lysine.

It belongs to the class-I pyridoxal-phosphate-dependent aminotransferase family. Homodimer. Pyridoxal 5'-phosphate serves as cofactor.

It carries out the reaction S-adenosyl-L-methionine = 1-aminocyclopropane-1-carboxylate + S-methyl-5'-thioadenosine + H(+). The protein operates within alkene biosynthesis; ethylene biosynthesis via S-adenosyl-L-methionine; ethylene from S-adenosyl-L-methionine: step 1/2. Functionally, catalyzes the formation of 1-aminocyclopropane-1-carboxylate, a direct precursor of ethylene in higher plants. The polypeptide is 1-aminocyclopropane-1-carboxylate synthase 4 (ACS4) (Solanum lycopersicum (Tomato)).